We begin with the raw amino-acid sequence, 293 residues long: HTH-type transcriptional regulator HdfR (293 aa).

The region spanning 1-58 is the HTH lysR-type domain; that stretch reads MDTELLKTFLEVSRTRHFGRAAESLYLTQSAVSFRIRQLENQLGANLFTRHRNNIRLT. The H-T-H motif DNA-binding region spans 18-37; that stretch reads FGRAAESLYLTQSAVSFRIR.

The protein belongs to the LysR transcriptional regulatory family.

Negatively regulates the transcription of the flagellar master operon flhDC by binding to the upstream region of the operon. This Yersinia enterocolitica serotype O:8 / biotype 1B (strain NCTC 13174 / 8081) protein is HTH-type transcriptional regulator HdfR.